The chain runs to 661 residues: Putative DUF21 domain-containing protein At3g13070, chloroplastic (661 aa).

A chloroplast-targeting transit peptide spans 1–71 (MMGMALELSV…RSCEFSYRSR (71 aa)). Helical transmembrane passes span 105 to 125 (GIVI…KVLA), 162 to 182 (GLIL…ETSI), 213 to 233 (FLTT…ALVT), 239 to 259 (IFGE…ILLL), and 285 to 305 (WLSL…MGIL). Positions 154-340 (VLTVLREQGL…ELSGAIEEEE (187 aa)) constitute a CNNM transmembrane domain. CBS domains lie at 359–420 (MTPL…LLES) and 426–484 (MAHK…IFDE). Disordered regions lie at residues 559-578 (ESWE…QEPK) and 628-661 (SSEE…KKQQ). Acidic residues-rich tracts occupy residues 560-570 (SWEEDGEEEEG) and 630-643 (EEDD…EDQS). Over residues 648–661 (LDEHVLADNSKKQQ) the composition is skewed to basic and acidic residues.

It localises to the plastid. The protein localises to the chloroplast membrane. In Arabidopsis thaliana (Mouse-ear cress), this protein is Putative DUF21 domain-containing protein At3g13070, chloroplastic (CBSDUFCH1).